Reading from the N-terminus, the 363-residue chain is Histidinol-phosphate aminotransferase (363 aa).

Lys220 carries the N6-(pyridoxal phosphate)lysine modification.

It belongs to the class-II pyridoxal-phosphate-dependent aminotransferase family. Histidinol-phosphate aminotransferase subfamily. Homodimer. Requires pyridoxal 5'-phosphate as cofactor.

The catalysed reaction is L-histidinol phosphate + 2-oxoglutarate = 3-(imidazol-4-yl)-2-oxopropyl phosphate + L-glutamate. It functions in the pathway amino-acid biosynthesis; L-histidine biosynthesis; L-histidine from 5-phospho-alpha-D-ribose 1-diphosphate: step 7/9. The protein is Histidinol-phosphate aminotransferase of Chlorobium chlorochromatii (strain CaD3).